Here is a 73-residue protein sequence, read N- to C-terminus: Antimicrobial peptide TsAP-2 (73 aa).

The N-terminal stretch at 1-22 is a signal peptide; the sequence is MQIKHLITIFFLVLIVADHCHA. The residue at position 39 (Lys39) is a Lysine amide. The propeptide occupies 45-73; the sequence is EITSQIEQYRNLQKREAELENLLANLPVY.

Belongs to the non-disulfide-bridged peptide (NDBP) superfamily. Short antimicrobial peptide (group 4) family. In terms of tissue distribution, expressed by the venom gland.

It is found in the secreted. Its function is as follows. Antimicrobial peptide. Has a high antibacterial activity against the Gram-positive bacterium S.aureus (MIC=5-17.30 uM), the methicillin-resistant S.aureus (MRSA) (MIC=17.30 uM), and E.faecalis (MIC=69.23 uM). Has antifungal activity against Candida spp. and one Cryptococcus neoformans strains with MICs values ranging from 6.25 to 100 uM. Also shows an inhibitory activity on C.albicans biofilms at high concentrations. Has a moderate hemolytic potency (18% at 20 uM). Also inhibits the growth of the five human cancer cell lines tested (the squamous carcinoma cell line H157 (IC(50)=4.1 uM), the lung adenocarcinoma cell line H838 (11.0 uM), the breast carcinoma cell line MCF-7 (6.4 uM), the androgen-independent prostate adenocarcinoma cell line PC3 (13.3 uM) and the glioblastoma cell line U251-MG (15.4 uM)). In the model of polymicrobial sepsis, it exhibits an antibiotic effect, reducing the levels of microorganisms in the infectious focus and the inflammatory responses in the lung and cecum of septic animals. The polypeptide is Antimicrobial peptide TsAP-2 (Tityus serrulatus (Brazilian scorpion)).